The primary structure comprises 492 residues: Glutamyl-tRNA(Gln) amidotransferase subunit A (492 aa).

Catalysis depends on charge relay system residues lysine 78 and serine 158. Residue serine 182 is the Acyl-ester intermediate of the active site.

This sequence belongs to the amidase family. GatA subfamily. As to quaternary structure, heterotrimer of A, B and C subunits.

It carries out the reaction L-glutamyl-tRNA(Gln) + L-glutamine + ATP + H2O = L-glutaminyl-tRNA(Gln) + L-glutamate + ADP + phosphate + H(+). Allows the formation of correctly charged Gln-tRNA(Gln) through the transamidation of misacylated Glu-tRNA(Gln) in organisms which lack glutaminyl-tRNA synthetase. The reaction takes place in the presence of glutamine and ATP through an activated gamma-phospho-Glu-tRNA(Gln). This chain is Glutamyl-tRNA(Gln) amidotransferase subunit A, found in Orientia tsutsugamushi (strain Ikeda) (Rickettsia tsutsugamushi).